The sequence spans 496 residues: Genome polyprotein (496 aa).

Over 1–447 the chain is Extracellular; that stretch reads SRCTHLENRD…HTVLGGAFNS (447 aa). Cystine bridges form between C3-C30, C60-C116, C60-C121, C74-C105, C92-C116, and C92-C121. The segment at 98-111 is fusion peptide; sequence DRGWGNHCGLFGKG. N154 carries N-linked (GlcNAc...) asparagine; by host glycosylation. Disulfide bonds link C186/C290 and C307/C338. Residues 448–468 form a helical membrane-spanning segment; the sequence is IFGGVGFLPKLLMGVALAWLG. The Cytoplasmic portion of the chain corresponds to 469 to 479; sequence LNTRNPTMSMS. A helical membrane pass occupies residues 480–496; sequence FLMAGGLVLAMTLGVGA.

As to quaternary structure, homodimer; in the endoplasmic reticulum and Golgi. N-glycosylated.

The protein localises to the virion membrane. Its subcellular location is the host endoplasmic reticulum membrane. Its function is as follows. Binds to host cell surface receptor and mediates fusion between viral and cellular membranes. Envelope protein is synthesized in the endoplasmic reticulum in the form of heterodimer with protein prM. They play a role in virion budding in the ER, and the newly formed immature particle is covered with 60 spikes composed of heterodimer between precursor prM and envelope protein E. The virion is transported to the Golgi apparatus where the low pH causes dissociation of PrM-E heterodimers and formation of E homodimers. prM-E cleavage is ineficient, and many virions are only partially matured. These uncleaved prM would play a role in immune evasion. The polypeptide is Genome polyprotein (Bos taurus (Bovine)).